The chain runs to 312 residues: HPr kinase/phosphorylase (312 aa).

Residues histidine 139 and lysine 160 contribute to the active site. 154 to 161 (GSSGVGKS) provides a ligand contact to ATP. Residue serine 161 participates in Mg(2+) binding. The active-site Proton acceptor; for phosphorylation activity. Proton donor; for dephosphorylation activity is aspartate 178. The segment at 202–211 (LEIRGLGIIN) is important for the catalytic mechanism of both phosphorylation and dephosphorylation. Position 203 (glutamate 203) interacts with Mg(2+). Arginine 244 is a catalytic residue. An important for the catalytic mechanism of dephosphorylation region spans residues 265–270 (PVRPGR).

Belongs to the HPrK/P family. In terms of assembly, homohexamer. Mg(2+) is required as a cofactor.

The catalysed reaction is [HPr protein]-L-serine + ATP = [HPr protein]-O-phospho-L-serine + ADP + H(+). It catalyses the reaction [HPr protein]-O-phospho-L-serine + phosphate + H(+) = [HPr protein]-L-serine + diphosphate. Functionally, catalyzes the ATP- as well as the pyrophosphate-dependent phosphorylation of a specific serine residue in HPr, a phosphocarrier protein of the phosphoenolpyruvate-dependent sugar phosphotransferase system (PTS). HprK/P also catalyzes the pyrophosphate-producing, inorganic phosphate-dependent dephosphorylation (phosphorolysis) of seryl-phosphorylated HPr (P-Ser-HPr). The two antagonistic activities of HprK/P are regulated by several intracellular metabolites, which change their concentration in response to the absence or presence of rapidly metabolisable carbon sources (glucose, fructose, etc.) in the growth medium. Therefore, by controlling the phosphorylation state of HPr, HPrK/P is a sensor enzyme that plays a major role in the regulation of carbon metabolism and sugar transport: it mediates carbon catabolite repression (CCR), and regulates PTS-catalyzed carbohydrate uptake and inducer exclusion. In Listeria monocytogenes serotype 4b (strain CLIP80459), this protein is HPr kinase/phosphorylase.